Here is an 843-residue protein sequence, read N- to C-terminus: Elongation factor 2 (843 aa).

In terms of domain architecture, tr-type G spans 17 to 344 (HNIRNMSVIA…MMIFHLPSPH (328 aa)). GTP-binding positions include 26 to 33 (AHVDHGKS) and 158 to 161 (NKMD). A Diphthamide modification is found at His-700. At Ser-837 the chain carries Phosphoserine.

This sequence belongs to the TRAFAC class translation factor GTPase superfamily. Classic translation factor GTPase family. As to quaternary structure, may interact with glutaredoxins (Grxs). Expressed in root, stem, leaves, flowers and siliques.

The protein localises to the cytoplasm. It carries out the reaction GTP + H2O = GDP + phosphate + H(+). Its pathway is protein biosynthesis; polypeptide chain elongation. Its function is as follows. Catalyzes the GTP-dependent ribosomal translocation step during translation elongation. During this step, the ribosome changes from the pre-translocational (PRE) to the post-translocational (POST) state as the newly formed A-site-bound peptidyl-tRNA and P-site-bound deacylated tRNA move to the P and E sites, respectively. Catalyzes the coordinated movement of the two tRNA molecules, the mRNA and conformational changes in the ribosome. Involved in cold responses leading to freezing tolerance via the induction of cold-responsive genes. This chain is Elongation factor 2, found in Arabidopsis thaliana (Mouse-ear cress).